A 492-amino-acid polypeptide reads, in one-letter code: Myocyte-specific enhancer factor 2A (492 aa).

Residues 3 to 57 enclose the MADS-box domain; the sequence is RKKIQITRIMDERNRQVTFTKRKFGLMKKAYELSVLCDCEIALIIFNSSNKLFQY. A DNA-binding region (mef2-type) is located at residues 58–86; the sequence is ASTDMDKVLLKYTEYNEPHESRTNSDIVE. The residue at position 59 (serine 59) is a Phosphoserine; by CK2. Serine 98 carries the phosphoserine modification. The disordered stretch occupies residues 183–227; it reads PQATLHRNVSPGAPQRPPSTGSAGGMLSTSDLTVPNGAGSSPVGN. Polar residues predominate over residues 209-227; sequence LSTSDLTVPNGAGSSPVGN. The residue at position 235 (serine 235) is a Phosphoserine. Positions 242-270 are disordered; sequence TGANSLGKVMPTKSPPPPGGGSLGMNSRK. N6-acetyllysine is present on lysine 249. Position 255 is a phosphoserine (serine 255). The segment at 266 to 283 is required for interaction with MAPKs; sequence MNSRKPDLRVVIPPSSKG. Residues threonine 304 and threonine 311 each carry the phosphothreonine; by MAPK7 and MAPK14 modification. Serine 347 is subject to Phosphoserine; by MAPK7. The span at 382–394 shows a compositional bias: polar residues; sequence SNLSINTNQNINI. Positions 382-492 are disordered; that stretch reads SNLSINTNQN…KRMRMDAWVT (111 aa). The residue at position 395 (lysine 395) is an N6-acetyllysine; alternate. Lysine 395 participates in a covalent cross-link: Glycyl lysine isopeptide (Lys-Gly) (interchain with G-Cter in SUMO); alternate. Phosphoserine; by CDK5 is present on serine 400. Position 407 is a phosphothreonine (threonine 407). Positions 417-430 are enriched in pro residues; that stretch reads PQPPPPPPQAPQPQ. Serine 438 is subject to Phosphoserine; by MAPK. The span at 438-451 shows a compositional bias: low complexity; that stretch reads SPVDSLSSSSSSYD. Composition is skewed to basic and acidic residues over residues 452 to 462 and 473 to 492; these read GSDREDPRGDF and NSED…AWVT.

Binds DNA as a homo- or heterodimer. Dimerizes with MEF2D. Interacts with HDAC7. Interacts with PIAS1; the interaction enhances sumoylation. Interacts with HDAC4, HDAC9 and SLC2A4RG. Interacts (via the N-terminal) with MAPK7; the interaction results in the phosphorylation and transcriptional activity of MEF2A. In terms of processing, constitutive phosphorylation on Ser-400 promotes Lys-395 sumoylation thus preventing acetylation at this site. Dephosphorylation on Ser-400 by PPP3CA upon neuron depolarization promotes a switch from sumoylation to acetylation on residue Lys-395 leading to inhibition of dendrite claw differentiation. Phosphorylation on Thr-304 and Thr-311 are the main sites involved in p38 MAPK signaling and activate transcription. Phosphorylated on these sites by MAPK14/p38alpha and MAPK11/p38beta, but not by MAPK13/p38delta nor by MAPK12/p38gamma. Phosphorylation on Ser-400 by CDK5 induced by neurotoxicity inhibits MEF2A transcriptional activation leading to apoptosis of cortical neurons. Phosphorylation on Thr-304, Thr-311 and Ser-347 can be induced by EGF. Post-translationally, sumoylation on Lys-395 is enhanced by PIAS1 and represses transcriptional activity. Phosphorylation on Ser-400 is required for sumoylation. Has no effect on nuclear location nor on DNA binding. Sumoylated with SUMO1 and, to a lesser extent with SUMO2 and SUMO3. PIASx facilitates sumoylation in postsynaptic dendrites in the cerebellar cortex and promotes their morphogenesis. Acetylation on Lys-395 activates transcriptional activity. Acetylated by p300 on several sites in diffentiating myocytes. Acetylation on Lys-4 increases DNA binding and transactivation. Hyperacetylation by p300 leads to enhanced cardiac myocyte growth and heart failure. In terms of processing, proteolytically cleaved in cerebellar granule neurons on several sites by caspase 3 and caspase 7 following neurotoxicity. Preferentially cleaves the CDK5-mediated hyperphosphorylated form which leads to neuron apoptosis and transcriptional inactivation.

The protein localises to the nucleus. In terms of biological role, transcriptional activator which binds specifically to the MEF2 element, 5'-YTA[AT](4)TAR-3', found in numerous muscle-specific genes. Also involved in the activation of numerous growth factor- and stress-induced genes. Mediates cellular functions not only in skeletal and cardiac muscle development, but also in neuronal differentiation and survival. Plays diverse roles in the control of cell growth, survival and apoptosis via p38 MAPK signaling in muscle-specific and/or growth factor-related transcription. In cerebellar granule neurons, phosphorylated and sumoylated MEF2A represses transcription of NUR77 promoting synaptic differentiation. Associates with chromatin to the ZNF16 promoter. The polypeptide is Myocyte-specific enhancer factor 2A (MEF2A) (Bos taurus (Bovine)).